We begin with the raw amino-acid sequence, 503 residues long: Sarpagan bridge enzyme 1 (503 aa).

Residues 3–23 (ISVTTSIALATIVFFLYKLAT) form a helical; Signal-anchor for type II membrane protein membrane-spanning segment. Residue Cys-442 participates in heme binding.

The protein belongs to the cytochrome P450 family. Requires heme as cofactor. Highly expressed in roots. Expressed at low levels in leaves, stems and flowers.

It localises to the endoplasmic reticulum membrane. The catalysed reaction is (19E)-geissoschizine + reduced [NADPH--hemoprotein reductase] + O2 = polyneuridine aldehyde + oxidized [NADPH--hemoprotein reductase] + 2 H2O + H(+). It carries out the reaction tetrahydroalstonine + A + reduced [NADPH--hemoprotein reductase] + O2 = alstonine + AH2 + oxidized [NADPH--hemoprotein reductase] + 2 H2O + H(+). It catalyses the reaction ajmalicine + A + reduced [NADPH--hemoprotein reductase] + O2 = serpentine + AH2 + oxidized [NADPH--hemoprotein reductase] + 2 H2O + H(+). The protein operates within alkaloid biosynthesis; ajmaline biosynthesis. In terms of biological role, monooxygenase involved in the biosynthesis of ajmaline-type monoterpenoid indole alkaloids (MIAs) natural products, important plant-derived pharmaceuticals used in the therapy of heart disorders. Converts by cyclization the strictosidine-derived geissoschizine to the sarpagan alkaloid polyneuridine aldehyde, precursor of vomilenine, an intermediate chemical in the biosynthesis of ajmaline. Converts by aromatization the tetrahydro-beta-carboline alkaloids tetrahydroalstonine and ajmalicine to the corresponding beta-carboline alkaloids alstonine and serpentine, respectively. The chain is Sarpagan bridge enzyme 1 from Rauvolfia serpentina (Serpentine wood).